A 282-amino-acid chain; its full sequence is Glycine betaine transport system permease protein OpuAB (282 aa).

Residues methionine 1–aspartate 18 lie on the Extracellular side of the membrane. Residues tryptophan 19–valine 39 form a helical membrane-spanning segment. Residues asparagine 40–threonine 44 lie on the Cytoplasmic side of the membrane. Residues glycine 45–isoleucine 65 traverse the membrane as a helical segment. Residues serine 66 to glycine 69 are Extracellular-facing. A helical membrane pass occupies residues isoleucine 70 to methionine 90. One can recognise an ABC transmembrane type-1 domain in the interval methionine 90–threonine 269. Residues leucine 91–threonine 93 lie on the Cytoplasmic side of the membrane. The chain crosses the membrane as a helical span at residues leucine 94–tryptophan 114. Over alanine 115–alanine 137 the chain is Extracellular. The helical transmembrane segment at phenylalanine 138–alanine 158 threads the bilayer. Residues serine 159–glutamine 215 lie on the Cytoplasmic side of the membrane. The helical transmembrane segment at serine 216–glycine 236 threads the bilayer. Residues serine 237–alanine 242 are Extracellular-facing. A helical transmembrane segment spans residues valine 243–isoleucine 263. Over threonine 264–alanine 282 the chain is Cytoplasmic.

This sequence belongs to the binding-protein-dependent transport system permease family. CysTW subfamily. The complex is composed of two ATP-binding proteins (OpuAA), two transmembrane proteins (OpuAB) and a solute-binding protein (OpuAC).

Its subcellular location is the cell membrane. In terms of biological role, involved in a multicomponent binding-protein-dependent transport system for glycine betaine; probably responsible for the translocation of the substrate across the membrane. This is Glycine betaine transport system permease protein OpuAB (opuAB) from Bacillus subtilis (strain 168).